Reading from the N-terminus, the 245-residue chain is Thioredoxin-like 1-2, chloroplastic (245 aa).

Residues 1-92 (MDAISSLGTN…TNHNMLEIQS (92 aa)) constitute a chloroplast transit peptide. Residues 93–194 (ANHLVDSLLN…FKKALDKHGS (102 aa)) enclose the Thioredoxin domain. Residues Cys-117 and Cys-120 each act as nucleophile in the active site. The cysteines at positions 117 and 120 are disulfide-linked.

Belongs to the thioredoxin family.

Its subcellular location is the plastid. It is found in the chloroplast. Probable thiol-disulfide oxidoreductase that may participate in various redox reactions. The chain is Thioredoxin-like 1-2, chloroplastic from Arabidopsis thaliana (Mouse-ear cress).